The following is an 873-amino-acid chain: Ectonucleotide pyrophosphatase/phosphodiesterase family member 3 (873 aa).

The Cytoplasmic portion of the chain corresponds to 1–11; the sequence is MESMLTLAMEQ. The helical; Signal-anchor for type II membrane protein transmembrane segment at 12–30 threads the bilayer; sequence PVKRNTLKKYKIACIVLLA. Over 31–873 the chain is Extracellular; it reads LLVIVSLGLG…TYLPTFETTI (843 aa). 2 consecutive SMB domains span residues 51–93 and 94–138; these read QGSC…VEST and RIWM…GETS. Disulfide bonds link cysteine 54–cysteine 71, cysteine 58–cysteine 89, cysteine 69–cysteine 82, cysteine 75–cysteine 81, cysteine 98–cysteine 115, cysteine 103–cysteine 133, cysteine 113–cysteine 126, cysteine 119–cysteine 125, cysteine 144–cysteine 190, and cysteine 152–cysteine 364. The Cell attachment site motif lies at 78 to 80; it reads RGD. The phosphodiesterase stretch occupies residues 160–544; sequence PVILFSMDGF…HGSLNHLLKV (385 aa). Aspartate 167 provides a ligand contact to Zn(2+). An ATP-binding site is contributed by lysine 204. Zn(2+) is bound at residue threonine 205. Threonine 205 serves as the catalytic Nucleophile. Residue asparagine 226 coordinates ATP. The N-linked (GlcNAc...) asparagine glycan is linked to asparagine 236. Glutamate 275 is a binding site for ATP. Residue asparagine 279 is glycosylated (N-linked (GlcNAc...) asparagine). Tyrosine 289 serves as a coordination point for ATP. Residue asparagine 290 is glycosylated (N-linked (GlcNAc...) asparagine). Zn(2+) is bound by residues aspartate 325, histidine 329, aspartate 372, and histidine 373. Disulfide bonds link cysteine 380–cysteine 477, cysteine 428–cysteine 816, cysteine 561–cysteine 621, cysteine 573–cysteine 677, cysteine 575–cysteine 662, and cysteine 785–cysteine 795. N-linked (GlcNAc...) asparagine glycosylation occurs at asparagine 425. Histidine 482 lines the Zn(2+) pocket. N-linked (GlcNAc...) asparagine glycosylation is found at asparagine 532, asparagine 592, asparagine 685, and asparagine 697. Positions 580-873 are nuclease; sequence NSIQLEQVNQ…TYLPTFETTI (294 aa). Aspartate 750, asparagine 752, aspartate 754, histidine 756, and aspartate 758 together coordinate Ca(2+). Residue asparagine 787 is glycosylated (N-linked (GlcNAc...) asparagine).

As to quaternary structure, monomer and homodimer. The cofactor is Zn(2+). N-glycosylated. N-glycosylation is necessary for normal transport to the cell membrane, but is not the apical targeting signal.

It is found in the cell membrane. Its subcellular location is the apical cell membrane. The protein resides in the secreted. The catalysed reaction is a ribonucleoside 5'-triphosphate + H2O = a ribonucleoside 5'-phosphate + diphosphate + H(+). It catalyses the reaction ATP + H2O = AMP + diphosphate + H(+). The enzyme catalyses CTP + H2O = CMP + diphosphate + H(+). It carries out the reaction GTP + H2O = GMP + diphosphate + H(+). The catalysed reaction is UTP + H2O = UMP + diphosphate + H(+). It catalyses the reaction UDP-N-acetyl-alpha-D-glucosamine + H2O = N-acetyl-alpha-D-glucosamine 1-phosphate + UMP + 2 H(+). The enzyme catalyses P(1),P(3)-bis(5'-adenosyl) triphosphate + H2O = AMP + ADP + 2 H(+). It carries out the reaction P(1),P(4)-bis(5'-adenosyl) tetraphosphate + H2O = AMP + ATP + 2 H(+). The catalysed reaction is P(1),P(5)-bis(5'-adenosyl) pentaphosphate + H2O = adenosine 5'-tetraphosphate + AMP + 2 H(+). It catalyses the reaction P(1),P(4)-bis(5'-guanosyl) tetraphosphate + H2O = GMP + GTP + 2 H(+). The enzyme catalyses Hydrolytically removes 5'-nucleotides successively from the 3'-hydroxy termini of 3'-hydroxy-terminated oligonucleotides.. Hydrolase that metabolizes extracellular nucleotides, including ATP, GTP, UTP and CTP. Limits mast cells and basophils response during inflammation and during the chronic phases of allergic responses by eliminating extracellular ATP, a signaling molecule activating these cells in an autocrine manner. Metabolizes extracellular ATP in the lumen of the small intestine, and thereby prevents ATP-induced apoptosis of intestinal plasmacytoid dendritic cells. Has a broad specificity and can also hydrolyze UDP-GlcNAc into UMP and GlcNAc-1-phosphate and potentially several other intracellular nucleotide sugars, including UDP-GalNAc, CMP-NeuAc, GDP-Fuc, and UDP-GlcA. Thereby, could modulate glycan biosynthesis and protein glycosylation. Can hydrolyze extracellular dinucleoside polyphosphates, including the vasoactive adenosine polyphosphates as well. In addition, displays an alkaline phosphodiesterase activity in vitro. In Pongo abelii (Sumatran orangutan), this protein is Ectonucleotide pyrophosphatase/phosphodiesterase family member 3.